Here is a 376-residue protein sequence, read N- to C-terminus: Guanine nucleotide-binding protein G(s) subunit alpha (376 aa).

Glycine 2 carries N-palmitoyl glycine lipidation. A lipid anchor (S-palmitoyl cysteine) is attached at cysteine 3. In terms of domain architecture, G-alpha spans 36–376 (GTHRLLLLGA…RMHLRQYELL (341 aa)). The segment at 39-52 (RLLLLGAGESGKST) is G1 motif. GTP contacts are provided by residues 44–51 (GAGESGKS), 180–186 (LRCRVLT), 205–209 (DVGGQ), 274–277 (NKQD), and alanine 348. Serine 51 and threonine 186 together coordinate Mg(2+). The tract at residues 178 to 186 (DILRCRVLT) is G2 motif. The tract at residues 201-210 (FHMFDVGGQR) is G3 motif. Residues 270–277 (ILFLNKQD) are G4 motif. Residues 346-351 (TCAVDT) form a G5 motif region.

The protein belongs to the G-alpha family. G(s) subfamily. In terms of assembly, g proteins are composed of 3 units; alpha, beta and gamma. The alpha chain contains the guanine nucleotide binding site.

Functionally, guanine nucleotide-binding proteins (G proteins) are involved as modulators or transducers in various transmembrane signaling systems. The G(s) protein is involved in hormonal regulation of adenylate cyclase: it activates the cyclase in response to beta-adrenergic stimuli. The polypeptide is Guanine nucleotide-binding protein G(s) subunit alpha (Lymnaea stagnalis (Great pond snail)).